Here is a 610-residue protein sequence, read N- to C-terminus: Menin (610 aa).

Residues G214 to P390 are interaction with FANCD2. The interval A462–T552 is disordered. Residues R484–L500 show a composition bias toward basic and acidic residues. Phosphoserine is present on residues S487 and S543. Over residues A537–G548 the composition is skewed to pro residues. Residue T594 is modified to Phosphothreonine.

In terms of assembly, component of the MLL-HCF complex, at least composed of KMT2A/MLL1, MEN1, ASH2L, RBBP5, DPY30, WDR5, HCFC1 and HCFC2. Component of the menin-associated histone methyltransferase complex, at least composed of KMT2B/MLL4, MEN1, ASH2L, RBBP5, DPY30 and WDR5. Interacts with POLR2B. Interacts with POLR2A phosphorylated at 'Ser-5', but not with the unphosphorylated, nor 'Ser-2' phosphorylated POLR2A forms. Interacts with FANCD2 and DBF4. Interacts with SMAD3, but not with SMAD2, nor SMAD4. Directly interacts with NFKB1, NFKB2 and RELA. Interacts with JUND (via MBM motif); inhibits the interaction of JUND with MAPK10 and the phosphorylation of JUND by MAP kinases MAPK8 and MAPK10. Interacts with KMT2A (via MBM motif). The KMT2A-MEN1 complex interacts with PSIP1 with a greater affinity as MEN1 enhances interaction of KMT2A with PSIP1.

It localises to the nucleus. In terms of biological role, essential component of a MLL/SET1 histone methyltransferase (HMT) complex, a complex that specifically methylates 'Lys-4' of histone H3 (H3K4). Functions as a transcriptional regulator. Binds to the TERT promoter and represses telomerase expression. Plays a role in TGFB1-mediated inhibition of cell-proliferation, possibly regulating SMAD3 transcriptional activity. Represses JUND-mediated transcriptional activation on AP1 sites, as well as that mediated by NFKB subunit RELA. Positively regulates HOXC8 and HOXC6 gene expression. May be involved in normal hematopoiesis through the activation of HOXA9 expression. May be involved in DNA repair. In Canis lupus familiaris (Dog), this protein is Menin (MEN1).